A 109-amino-acid chain; its full sequence is Histidine-rich carboxyl terminus protein 1 (109 aa).

A helical membrane pass occupies residues 13 to 33 (WITGTALAFLMLLWLMALCLF). The disordered stretch occupies residues 77 to 109 (TSVGVHHHHHHSPHRLHHHKHHHRHHHAHGARR). Basic residues predominate over residues 81-109 (VHHHHHHSPHRLHHHKHHHRHHHAHGARR).

It is found in the membrane. In Mus musculus (Mouse), this protein is Histidine-rich carboxyl terminus protein 1 (Hrct1).